A 201-amino-acid chain; its full sequence is NADH-quinone oxidoreductase subunit C (201 aa).

The protein belongs to the complex I 30 kDa subunit family. In terms of assembly, NDH-1 is composed of 14 different subunits. Subunits NuoB, C, D, E, F, and G constitute the peripheral sector of the complex.

It is found in the cell inner membrane. The catalysed reaction is a quinone + NADH + 5 H(+)(in) = a quinol + NAD(+) + 4 H(+)(out). Its function is as follows. NDH-1 shuttles electrons from NADH, via FMN and iron-sulfur (Fe-S) centers, to quinones in the respiratory chain. The immediate electron acceptor for the enzyme in this species is believed to be ubiquinone. Couples the redox reaction to proton translocation (for every two electrons transferred, four hydrogen ions are translocated across the cytoplasmic membrane), and thus conserves the redox energy in a proton gradient. The protein is NADH-quinone oxidoreductase subunit C of Mesorhizobium japonicum (strain LMG 29417 / CECT 9101 / MAFF 303099) (Mesorhizobium loti (strain MAFF 303099)).